A 170-amino-acid chain; its full sequence is MTDTRRAILAGGCFWGMQDLIRRQPGVVSTRVGYTGGTNDHPTYRNHPGHAEAVEIVYDPERTDYRALLEFFFQIHDPTTKDRQGNDIGTSYRSAIFYLDDEQRRVAEDTIADVDASGLWPGKVVTEVTPASEFWEAEPEHQDYLLRYPNGYTCHYPRPDWKLPKRQATA.

Cysteine 13 is a catalytic residue.

It belongs to the MsrA Met sulfoxide reductase family.

The enzyme catalyses L-methionyl-[protein] + [thioredoxin]-disulfide + H2O = L-methionyl-(S)-S-oxide-[protein] + [thioredoxin]-dithiol. The catalysed reaction is [thioredoxin]-disulfide + L-methionine + H2O = L-methionine (S)-S-oxide + [thioredoxin]-dithiol. Functionally, has an important function as a repair enzyme for proteins that have been inactivated by oxidation. Catalyzes the reversible oxidation-reduction of methionine sulfoxide in proteins to methionine. This Nocardia farcinica (strain IFM 10152) protein is Peptide methionine sulfoxide reductase MsrA.